The primary structure comprises 179 residues: Large ribosomal subunit protein uL6 (179 aa).

The protein belongs to the universal ribosomal protein uL6 family. Part of the 50S ribosomal subunit.

Functionally, this protein binds to the 23S rRNA, and is important in its secondary structure. It is located near the subunit interface in the base of the L7/L12 stalk, and near the tRNA binding site of the peptidyltransferase center. The polypeptide is Large ribosomal subunit protein uL6 (Mycobacterium ulcerans (strain Agy99)).